A 39-amino-acid polypeptide reads, in one-letter code: MIEPLLCGIVLGLVPITLLGLFVSAWNQYRRGSGLLDMD.

A helical transmembrane segment spans residues 5-25 (LLCGIVLGLVPITLLGLFVSA).

Belongs to the PetG family. As to quaternary structure, the 4 large subunits of the cytochrome b6-f complex are cytochrome b6, subunit IV (17 kDa polypeptide, PetD), cytochrome f and the Rieske protein, while the 4 small subunits are PetG, PetL, PetM and PetN. The complex functions as a dimer.

The protein localises to the cellular thylakoid membrane. Functionally, component of the cytochrome b6-f complex, which mediates electron transfer between photosystem II (PSII) and photosystem I (PSI), cyclic electron flow around PSI, and state transitions. PetG is required for either the stability or assembly of the cytochrome b6-f complex. The protein is Cytochrome b6-f complex subunit 5 of Prochlorococcus marinus (strain MIT 9515).